A 1476-amino-acid polypeptide reads, in one-letter code: Coiled-coil domain-containing protein 88B (1476 aa).

The stretch at 253 to 481 (SHHLALQLAN…RGLLQVLQGQ (229 aa)) forms a coiled coil. 4 disordered regions span residues 427–451 (QRSLEPPPGSPGEAPLAGAAPSLQD), 509–706 (VAFD…EGAL), 825–866 (RRQW…ERRE), and 1323–1476 (LMRP…SLSQ). Ser-436 carries the post-translational modification Phosphoserine. Residues 572–586 (SDWSPQESGSPVETQ) show a composition bias toward polar residues. Position 596 is a phosphoserine (Ser-596). 3 stretches are compositionally biased toward basic and acidic residues: residues 678–690 (EAREHDQRLEGTV), 825–834 (RRQWEREGSR), and 842–866 (AEERMQVLESEGRQHLEEAERERRE). Positions 720 to 1303 (LASGVAEQEA…KIMDQYRVLE (584 aa)) form a coiled coil. Ser-1348 and Ser-1379 each carry phosphoserine. Residues 1448 to 1469 (LQEHETDANREGPEVQEPEKRP) are compositionally biased toward basic and acidic residues.

The protein belongs to the CCDC88 family. As to quaternary structure, homodimer. Interacts with DOCK8. Interacts (via C-terminus) with intact microtubules. Interacts with dynein-dynactin motor complex. Interacts (via C-terminus) with HSPA5. In terms of tissue distribution, expressed in endothelium (at protein level). Expressed in NK cells (at protein level).

Its subcellular location is the membrane. The protein localises to the cytoplasm. It localises to the cytoskeleton. It is found in the microtubule organizing center. The protein resides in the endoplasmic reticulum. Its subcellular location is the golgi apparatus. In terms of biological role, acts as a positive regulator of T-cell maturation and inflammatory function. Required for several functions of T-cells, in both the CD4(+) and the CD8(+) compartments and this includes expression of cell surface markers of activation, proliferation, and cytokine production in response to specific or non-specific stimulation. Enhances NK cell cytotoxicity by positively regulating polarization of microtubule-organizing center (MTOC) to cytotoxic synapse, lytic granule transport along microtubules, and dynein-mediated clustering to MTOC. Interacts with HSPA5 and stabilizes the interaction between HSPA5 and ERN1, leading to suppression of ERN1-induced JNK activation and endoplasmic reticulum stress-induced apoptosis. The sequence is that of Coiled-coil domain-containing protein 88B (CCDC88B) from Homo sapiens (Human).